Reading from the N-terminus, the 328-residue chain is MSRLAHNKALPYKIIVDLSFHRTRLPSDVSSLIKFEQRPAIINIHGLLGSHVMFHSLNKLLSRKLDADIFSVDVRNHGISPKAIPYDYTTLTNDLIYFIETHIGLERPIYLLGFSMGGKIALLTTLYKNINIRKCISIDLPPYETPELDPMILQNYDLIMRIIRRDVKILRGSPSWQKKVLELFKSLECNKRKCGGAVALYFANGFLSVKSNNVHQAQLHYEQQQHDPYINYSMPLSSMPNLLDEVKKWPDLSNQRDFFQKGTASRKVLFMKGLQSNFINNDYSLLRYNFPCADVREFNTGHNLLLENPEDSFKCILNFFAEETLDFE.

In terms of domain architecture, AB hydrolase-1 spans 39–309 (PAIINIHGLL…TGHNLLLENP (271 aa)). Catalysis depends on charge relay system residues Ser-115, Asp-139, and His-302.

This sequence belongs to the AB hydrolase superfamily.

Its subcellular location is the mitochondrion. The catalysed reaction is ethanol + acetyl-CoA = ethyl acetate + CoA. It carries out the reaction acetyl-CoA + H2O = acetate + CoA + H(+). It catalyses the reaction ethyl acetate + H2O = ethanol + acetate + H(+). Its function is as follows. Alcohol acetyltransferase that catalyzes the synthesis of ethyl acetate from ethanol and acetyl-CoA. Can also function as a thioesterase by hydrolyzing acetyl-CoA in the absence of ethanol, as well as esterase hydrolyzing ethyl acetate. The polypeptide is Ethanol acetyltransferase 1 (Saccharomyces cerevisiae (strain ATCC 204508 / S288c) (Baker's yeast)).